Here is a 413-residue protein sequence, read N- to C-terminus: MRGEIISVGTELLLGQILNTNAKYLSEKLALLGIDIYFHTNVGDNEERLKECLNIAFNRSDLIITTGGLGPTVDDITKETVASFLGLPLVENIEAKEEIIRFFEKIGQTPTMNNFKQAFFPEGAKILPNKNGTAPGCIIEKDNKIIIILPGPPSELIPMFEESVYPYLKSKTNETIKSRVIKIFGLGESKVEEMVKPLLFNSNPTVAPLVGDGYVTLRITAKGHDDKEILEMIEDMESRIRGIIGDYIYAVDEEEMEEVVIKLLQKNKLTLAVSESCTGGLLAKKITDVSGASKVFNLGVVSYSNEAKENILGVRKSTLESYGAVSHETAKEMAENIRKLANADFGLSTTGIAGPTGGTPEKPVGLVYVGFATNEKVYVKKLMLSGDRSKIRTRTVLHALDIVRRYLLGIKID.

Belongs to the CinA family.

The chain is Putative competence-damage inducible protein from Thermoanaerobacter pseudethanolicus (strain ATCC 33223 / 39E) (Clostridium thermohydrosulfuricum).